The following is a 354-amino-acid chain: Serine/threonine-protein kinase ppk34 (354 aa).

In terms of domain architecture, Protein kinase spans 40–331; sequence YRLKNMLGYG…IEELLRDPFL (292 aa). ATP is bound by residues 46–54 and K69; that span reads LGYGACSTV. The active-site Proton acceptor is D200.

This sequence belongs to the protein kinase superfamily. Ser/Thr protein kinase family.

It localises to the cytoplasm. The protein resides in the nucleus. The catalysed reaction is L-seryl-[protein] + ATP = O-phospho-L-seryl-[protein] + ADP + H(+). It catalyses the reaction L-threonyl-[protein] + ATP = O-phospho-L-threonyl-[protein] + ADP + H(+). The chain is Serine/threonine-protein kinase ppk34 (ppk34) from Schizosaccharomyces pombe (strain 972 / ATCC 24843) (Fission yeast).